A 431-amino-acid polypeptide reads, in one-letter code: 5-methylthioadenosine/S-adenosylhomocysteine deaminase (431 aa).

Zn(2+) is bound by residues H68 and H70. The substrate site is built by E97 and H186. H213 contributes to the Zn(2+) binding site. Substrate-binding residues include E216 and D301. A Zn(2+)-binding site is contributed by D301.

The protein belongs to the metallo-dependent hydrolases superfamily. MTA/SAH deaminase family. Requires Zn(2+) as cofactor.

It catalyses the reaction S-adenosyl-L-homocysteine + H2O + H(+) = S-inosyl-L-homocysteine + NH4(+). The catalysed reaction is S-methyl-5'-thioadenosine + H2O + H(+) = S-methyl-5'-thioinosine + NH4(+). Catalyzes the deamination of 5-methylthioadenosine and S-adenosyl-L-homocysteine into 5-methylthioinosine and S-inosyl-L-homocysteine, respectively. Is also able to deaminate adenosine. In Halothermothrix orenii (strain H 168 / OCM 544 / DSM 9562), this protein is 5-methylthioadenosine/S-adenosylhomocysteine deaminase.